The following is a 407-amino-acid chain: Resuscitation-promoting factor RpfA (407 aa).

A signal peptide spans 1–33 (MSGRHRKPTTSNVSVAKIAFTGAVLGGGGIAMA). Disordered stretches follow at residues 142 to 253 (VNGE…ADLA) and 271 to 371 (LPAA…AETP). Over residues 148-159 (PLAPPPADPAPP) the composition is skewed to pro residues. The span at 160 to 170 (VELAANDLPAP) shows a compositional bias: low complexity. A compositionally biased stretch (pro residues) spans 171 to 193 (LGEPLPAAPADPAPPADLAPPAP). 2 tandem repeats follow at residues 178 to 185 (APADPAPP) and 186 to 193 (ADLAPPAP). The 12 X 8 AA approximate repeats of A-P-A-D-L-A-P-P stretch occupies residues 178–359 (APADPAPPAD…PDPQPADAPP (182 aa)). Over residues 194–210 (ADVAPPVELAVNDLPAP) the composition is skewed to low complexity. Residues 211–249 (LGEPLPAAPADPAPPADLAPPAPADLAPPAPADLAPPAP) show a composition bias toward pro residues. 10 repeat units span residues 218 to 225 (APADPAPP), 226 to 233 (ADLAPPAP), 240 to 247 (APADLAPP), 248 to 255 (APADLAPP), 274 to 281 (APAELAPP), 287 to 294 (ASADLAPP), 295 to 302 (APADLAPP), 303 to 310 (APAELAPP), 311 to 318 (APADLAPP), and 353 to 359 (QPADAPP). Residues 274–292 (APAELAPPADLAPASADLA) show a composition bias toward low complexity. Composition is skewed to pro residues over residues 293–312 (PPAPADLAPPAPAELAPPAP) and 350–361 (PDPQPADAPPPG).

The protein belongs to the transglycosylase family. Rpf subfamily.

Functionally, factor that stimulates resuscitation of dormant cells. Has peptidoglycan (PG) hydrolytic activity. This chain is Resuscitation-promoting factor RpfA (rpfA), found in Mycobacterium tuberculosis (strain CDC 1551 / Oshkosh).